We begin with the raw amino-acid sequence, 372 residues long: Oxidoreductase ptaL (372 aa).

The N-terminal stretch at 1 to 16 (MKHIVIIGGGFAGVST) is a signal peptide. 6-hydroxy-FAD contacts are provided by residues 8–12 (GGGFA) and arginine 51. The N-linked (GlcNAc...) asparagine glycan is linked to asparagine 251. Residue aspartate 285 coordinates 6-hydroxy-FAD.

This sequence belongs to the FAD-dependent oxidoreductase family. 6-hydroxy-FAD is required as a cofactor.

It participates in secondary metabolite biosynthesis. Its function is as follows. Oxidoreductase; part of the gene cluster that mediates the biosynthesis of pestheic acid, a diphenyl ether which is a biosynthetic precursor of the unique chloropupukeananes. The biosynthesis initiates from condensation of acetate and malonate units catalyzed by the non-reducing PKS ptaA. As the ptaA protein is TE/CLC domain-deficient, hydrolysis and Claisen cyclization of the polyketide could be catalyzed by ptaB containing a beta-lactamase domain. The ptaB protein might hydrolyze the thioester bond between the ACP of ptaA and the intermediate to release atrochrysone carboxylic acid, which is spontaneously dehydrated to form endocrocin anthrone. Endocrocin anthrone is then converted to endocrocin, catalyzed by the anthrone oxygenase ptaC. Spontaneous decarboxylation of endocrocin occurs to generate emodin. An O-methyltransferase (ptaH or ptaI) could methylate emodin to form physcion. PtaJ could then catalyze the oxidative cleavage of physcion, and rotation of the intermediate could then afford desmethylisosulochrin. PtaF, a putative NADH-dependent oxidoreductase, might also participate in the oxidative cleavage step. Desmethylisosulochrin is then transformed by another O-methyltransferase (ptaH or ptaI) to form isosulochrin. Chlorination of isosulochrin by ptaM in the cyclohexadienone B ring then produces chloroisosulochrin. PtaE is responsible for the oxidative coupling reactions of both benzophenones isosulochrin and chloroisosulochrin to RES-1214-1 and pestheic acid respectively, regardless of chlorination. This chain is Oxidoreductase ptaL, found in Pestalotiopsis fici (strain W106-1 / CGMCC3.15140).